The sequence spans 115 residues: DNA-directed RNA polymerase subunit omega (115 aa).

The protein belongs to the RNA polymerase subunit omega family. The RNAP catalytic core consists of 2 alpha, 1 beta, 1 beta' and 1 omega subunit. When a sigma factor is associated with the core the holoenzyme is formed, which can initiate transcription.

The catalysed reaction is RNA(n) + a ribonucleoside 5'-triphosphate = RNA(n+1) + diphosphate. In terms of biological role, promotes RNA polymerase assembly. Latches the N- and C-terminal regions of the beta' subunit thereby facilitating its interaction with the beta and alpha subunits. This is DNA-directed RNA polymerase subunit omega from Cutibacterium acnes (strain DSM 16379 / KPA171202) (Propionibacterium acnes).